The primary structure comprises 551 residues: Glucan 1,4-alpha-maltotetraohydrolase (551 aa).

The first 21 residues, 1–21 (MSHILRAAVLAAVLLPFPALA), serve as a signal peptide directing secretion. Aspartate 22, glutamine 23, histidine 34, aspartate 37, and glutamate 38 together coordinate Ca(2+). Position 99–100 (99–100 (YF)) interacts with substrate. Asparagine 137 is a binding site for Ca(2+). Histidine 138 provides a ligand contact to substrate. Cysteine 161 and cysteine 171 are joined by a disulfide. Ca(2+) contacts are provided by aspartate 172 and aspartate 175. 177–181 (FIGGE) lines the substrate pocket. Aspartate 183 provides a ligand contact to Ca(2+). A substrate-binding site is contributed by arginine 212. Aspartate 214 functions as the Nucleophile in the catalytic mechanism. Glycine 218 contacts Ca(2+). The cysteines at positions 237 and 272 are disulfide-linked. Residue glutamate 240 is the Proton donor of the active site. Histidine 314 and glutamine 326 together coordinate substrate. A CBM20 domain is found at 449 to 551 (GGEGGLVNVN…AAGASTSGSF (103 aa)).

The protein belongs to the glycosyl hydrolase 13 family. Monomer. Ca(2+) is required as a cofactor.

It is found in the secreted. The enzyme catalyses Hydrolysis of (1-&gt;4)-alpha-D-glucosidic linkages in amylaceous polysaccharides, to remove successive maltotetraose residues from the non-reducing chain ends.. It participates in glycan degradation; starch degradation. This is Glucan 1,4-alpha-maltotetraohydrolase (mta) from Roseateles saccharophilus (Pseudomonas saccharophila).